A 197-amino-acid chain; its full sequence is Protein GrpE (197 aa).

Positions 1 to 43 (MSSKEQKTPDGQAPEEIVTEQHEEVESVESAESAEQVDPRDEE) are disordered.

Belongs to the GrpE family. As to quaternary structure, homodimer.

The protein resides in the cytoplasm. Participates actively in the response to hyperosmotic and heat shock by preventing the aggregation of stress-denatured proteins, in association with DnaK and GrpE. It is the nucleotide exchange factor for DnaK and may function as a thermosensor. Unfolded proteins bind initially to DnaJ; upon interaction with the DnaJ-bound protein, DnaK hydrolyzes its bound ATP, resulting in the formation of a stable complex. GrpE releases ADP from DnaK; ATP binding to DnaK triggers the release of the substrate protein, thus completing the reaction cycle. Several rounds of ATP-dependent interactions between DnaJ, DnaK and GrpE are required for fully efficient folding. The chain is Protein GrpE from Cronobacter sakazakii (strain ATCC BAA-894) (Enterobacter sakazakii).